A 316-amino-acid polypeptide reads, in one-letter code: ATP synthase gamma chain (316 aa).

This sequence belongs to the ATPase gamma chain family. F-type ATPases have 2 components, CF(1) - the catalytic core - and CF(0) - the membrane proton channel. CF(1) has five subunits: alpha(3), beta(3), gamma(1), delta(1), epsilon(1). CF(0) has three main subunits: a, b and c.

The protein resides in the cellular thylakoid membrane. Produces ATP from ADP in the presence of a proton gradient across the membrane. The gamma chain is believed to be important in regulating ATPase activity and the flow of protons through the CF(0) complex. The sequence is that of ATP synthase gamma chain from Prochlorococcus marinus (strain MIT 9515).